The primary structure comprises 494 residues: MDVNPTLLFLKVPAQNAISTTFPYTGDPPYSHGTGTGYTMDTVNRTHQYSEKGKWTTNTETGAPQLNPIDGPLPEDNEPSGYAQTDCVLEAMAFLEKSHPGIFENSCLETMEIVQQTRVDKLTQGRQTYDWTLNRNQPAATALANTIEVFRSNGLTANESGRLIDFLKDVMESMDKGEMEITTHFQRKRRVRDNMTKKMVTQRTIGKKKQRLNKRSYLIRALTLNTMTKDAERGKLKRRAIATPGMQIRGFVYFVETLARSICEKLEQSGLPVGGNEKKAKLANVVRKMMTNSQDTELSFTITGDNTKWNENQNPRMFLAMITYITRKQPEWFRNVLSIAPIMFSNKMARLGKGYMFESKSMKLRTQIPAEMLASIDLKYFNESTRKKIEKIRPLLIDGTASLSPGMMMGMFNMLSTVLGVSILNLGQKRYTKTTYWWDGLQSSDDFALIVNAPNHEGIQAGVDRFYRTCKLVGINMSKKKSYINRTGTFEFTS.

Residues 50–82 are disordered; it reads SEKGKWTTNTETGAPQLNPIDGPLPEDNEPSGY. Positions 55 to 64 are enriched in polar residues; sequence WTTNTETGAP. 2 short sequence motifs (nuclear localization signal) span residues 187 to 195 and 203 to 216; these read RKRRVRDNM and RTIG…NKRS. Residues 249–256 form a promoter-binding site region; that stretch reads RGFVYFVE. The RdRp catalytic domain maps to 286–483; it reads VRKMMTNSQD…GINMSKKKSY (198 aa).

The protein belongs to the influenza viruses polymerase PB1 family. Influenza RNA polymerase is composed of three subunits: PB1, PB2 and PA. Interacts (via N-terminus) with PA (via C-terminus). Interacts (via C-terminus) with PB2 (via N-terminus); this interaction is essential for transcription initiation. Post-translationally, phosphorylated by host PRKCA.

It localises to the host nucleus. The protein resides in the host cytoplasm. The enzyme catalyses RNA(n) + a ribonucleoside 5'-triphosphate = RNA(n+1) + diphosphate. In terms of biological role, RNA-dependent RNA polymerase which is responsible for replication and transcription of virus RNA segments. The transcription of viral mRNAs occurs by a unique mechanism called cap-snatching. 5' methylated caps of cellular mRNAs are cleaved after 10-13 nucleotides by PA. In turn, these short capped RNAs are used as primers by PB1 for transcription of viral mRNAs. During virus replication, PB1 initiates RNA synthesis and copy vRNA into complementary RNA (cRNA) which in turn serves as a template for the production of more vRNAs. This chain is RNA-directed RNA polymerase catalytic subunit (PB1), found in Aves (Cat).